The chain runs to 479 residues: mRNA export factor ICP27 homolog (479 aa).

A compositionally biased stretch (low complexity) spans 1-15 (MVPSQRLSRTSSISS). Disordered stretches follow at residues 1–77 (MVPS…PSSV) and 91–210 (KKWD…NKPW). Acidic residues predominate over residues 35-44 (TDCDMDPMEG). Residues 132 to 142 (EVHGCTDESYG) show a composition bias toward basic and acidic residues. The Zn(2+) site is built by Cys354, His445, Cys449, and Cys454. A CHC2-type zinc finger spans residues 354-454 (CFLPNTRDYN…HTRDCRSASC (101 aa)).

The protein belongs to the HHV-1 ICP27 protein family. Interacts with host XPO1 and with the XPO1 export pathway components small GTPase RAN and nucleoporin NUP214. Interacts with host SPEN, OTT1 and OTT3. Interacts with host SRSF1, SRSF3, SRSF7 and SRPK1. Interacts with host DHX9; this interaction may have an inhibitory effect on virion production. Interacts (via N-terminus) with host NXF1; this interaction plays a role in mRNA export. In terms of processing, phosphorylated by cellular protein kinase CK2.

It is found in the host nucleus. The protein localises to the host cytoplasm. In terms of biological role, promotes the nuclear export of a subset of early and late viral mRNAs by interacting with mRNAs and cellular export proteins. Additionally may prevent the establishment of cellular antiviral state, by acting as an alternative splicing factor for cellular RNAs such as STAT1, resulting in a STAT1 mRNA incapable of producing the STAT1alpha isoform. The chain is mRNA export factor ICP27 homolog from Homo sapiens (Human).